A 496-amino-acid polypeptide reads, in one-letter code: Probable E3 ubiquitin-protein ligase XBOS32 (496 aa).

5 ANK repeats span residues 50–79, 83–112, 117–147, 180–209, and 223–252; these read GRNS…EINL, RGQT…NVHR, NGGS…SMPN, GGLT…SVIE, and AGST…SLSA. The RING-type zinc finger occupies 321 to 368; the sequence is CAVCLEGSCSVAAEGCKHEFCTRCALYLCSTSYTSVSPAGAIPCPLCR.

The enzyme catalyses S-ubiquitinyl-[E2 ubiquitin-conjugating enzyme]-L-cysteine + [acceptor protein]-L-lysine = [E2 ubiquitin-conjugating enzyme]-L-cysteine + N(6)-ubiquitinyl-[acceptor protein]-L-lysine.. Its pathway is protein modification; protein ubiquitination. The protein is Probable E3 ubiquitin-protein ligase XBOS32 (XBOS32) of Oryza sativa subsp. japonica (Rice).